Here is a 173-residue protein sequence, read N- to C-terminus: Microfibrillar-associated protein 5 (173 aa).

A signal peptide spans 1–21 (MSLLGPKVLLFLAAFIITSDW). The short motif at 30–32 (RGD) is the Cell attachment site element. Threonine 54 carries an O-linked (GalNAc...) threonine glycan. Residue asparagine 79 is glycosylated (N-linked (GlcNAc...) asparagine).

It belongs to the MFAP family. In terms of assembly, interacts with TGFB2. Interacts with BMP2. Interacts with FBN1 (via N-terminal domain) and FBN2. Post-translationally, forms intermolecular disulfide bonds either with other MAGP-2 molecules or with other components of the microfibrils. In terms of processing, N- and O-glycosylated. O-glycosylated with core 1 or possibly core 8 glycans. O-glycan heterogeneity at Thr-54: HexHexNAc (major) and HexHexNAc + sulfate (minor).

Its subcellular location is the secreted. It localises to the extracellular space. The protein localises to the extracellular matrix. May play a role in hematopoiesis. In the cardiovascular system, could regulate growth factors or participate in cell signaling in maintaining large vessel integrity. Component of the elastin-associated microfibrils. This Homo sapiens (Human) protein is Microfibrillar-associated protein 5 (MFAP5).